The following is a 541-amino-acid chain: Eukaryotic translation initiation factor 3 subunit L (541 aa).

The region spanning 308–516 (TFSDILLYIQ…IHIADTKVSH (209 aa)) is the PCI domain.

Belongs to the eIF-3 subunit L family. Component of the eukaryotic translation initiation factor 3 (eIF-3) complex. The eIF-3 complex interacts with pix.

The protein resides in the cytoplasm. Functionally, component of the eukaryotic translation initiation factor 3 (eIF-3) complex, which is involved in protein synthesis of a specialized repertoire of mRNAs and, together with other initiation factors, stimulates binding of mRNA and methionyl-tRNAi to the 40S ribosome. The eIF-3 complex specifically targets and initiates translation of a subset of mRNAs involved in cell proliferation. This Drosophila persimilis (Fruit fly) protein is Eukaryotic translation initiation factor 3 subunit L.